The chain runs to 469 residues: 6-phospho-beta-galactosidase (469 aa).

Residues Q19, H116, N159, E160, and N297 each coordinate D-galactose 6-phosphate. E160 functions as the Proton donor in the catalytic mechanism. E375 (nucleophile) is an active-site residue. D-galactose 6-phosphate-binding residues include S428, W429, K435, and Y437.

Belongs to the glycosyl hydrolase 1 family.

It catalyses the reaction a 6-phospho-beta-D-galactoside + H2O = D-galactose 6-phosphate + an alcohol. It functions in the pathway carbohydrate metabolism; lactose degradation; D-galactose 6-phosphate and beta-D-glucose from lactose 6-phosphate: step 1/1. This Streptococcus equi subsp. zooepidemicus (strain MGCS10565) protein is 6-phospho-beta-galactosidase.